The sequence spans 348 residues: Dihydroorotase (348 aa).

Residues His14 and His16 each contribute to the Zn(2+) site. Substrate-binding positions include 16-18 (HLR) and Asn42. Residues Lys100, His137, and His175 each contribute to the Zn(2+) site. The residue at position 100 (Lys100) is an N6-carboxylysine. His137 provides a ligand contact to substrate. Leu220 lines the substrate pocket. Asp248 lines the Zn(2+) pocket. Asp248 is a catalytic residue. His252 and Ala264 together coordinate substrate.

It belongs to the metallo-dependent hydrolases superfamily. DHOase family. Class II DHOase subfamily. As to quaternary structure, homodimer. Zn(2+) is required as a cofactor.

It carries out the reaction (S)-dihydroorotate + H2O = N-carbamoyl-L-aspartate + H(+). The protein operates within pyrimidine metabolism; UMP biosynthesis via de novo pathway; (S)-dihydroorotate from bicarbonate: step 3/3. In terms of biological role, catalyzes the reversible cyclization of carbamoyl aspartate to dihydroorotate. This is Dihydroorotase from Pseudomonas fluorescens (strain SBW25).